The chain runs to 234 residues: 1-(5-phosphoribosyl)-5-[(5-phosphoribosylamino)methylideneamino] imidazole-4-carboxamide isomerase (234 aa).

The active-site Proton acceptor is Asp-9. Catalysis depends on Asp-131, which acts as the Proton donor.

This sequence belongs to the HisA/HisF family.

It is found in the cytoplasm. The enzyme catalyses 1-(5-phospho-beta-D-ribosyl)-5-[(5-phospho-beta-D-ribosylamino)methylideneamino]imidazole-4-carboxamide = 5-[(5-phospho-1-deoxy-D-ribulos-1-ylimino)methylamino]-1-(5-phospho-beta-D-ribosyl)imidazole-4-carboxamide. Its pathway is amino-acid biosynthesis; L-histidine biosynthesis; L-histidine from 5-phospho-alpha-D-ribose 1-diphosphate: step 4/9. This Staphylococcus saprophyticus subsp. saprophyticus (strain ATCC 15305 / DSM 20229 / NCIMB 8711 / NCTC 7292 / S-41) protein is 1-(5-phosphoribosyl)-5-[(5-phosphoribosylamino)methylideneamino] imidazole-4-carboxamide isomerase.